Reading from the N-terminus, the 670-residue chain is MAGDDLVETKKGSSKNSKDSNESKLKQKSPAEFFAENKNIAGFDNPGKSLYTTVRELVENALDSAESISELPEVEVTIEEIVKSKFNSMIGLIDRERVDTQLYDDYETEKARGKRLAKEARASEIQAKNLASGKKNKEPGVSKVLKARGEASYYKVTCKDNGKGMPHDDIPNMFGRVLSGTKYGLKQTRGKFGLGAKMALIWSKMSTGLPIEISSSMKSQNYVTFCRLDIDIHRNIPHIHLHEKKGNKEKWHGAEIQVVIEGNWTTYRSKILHYMRQMAVITPYAQFLFRFISETPEKNVTIKFTRRTDVMPPIPIETKHHPSSVDLLLIKRLITDTSKKTLLQFLQNEFVNINKTLAARLIGEMGPDFGPSMAVKSVTSQQMVRIHQLFRQAKFDDPSGDCLSPAGEYNLRLGIIKELHPDMVATYSGSAQVFEGHPFIVEAGVSLGGRDVKQGINIFRFANRIPLLFEQGADVVTRTALKRINWNSYKINQTQDKIGVFVSIVSTKIPFKGTGKEYIGDDISEIATAVKSAIQQCCIQLKSKIVKRLQAREQQERKRSLSRYIPDATGAVYEVLKQMTEEHKTKRKRYGEEDIVMLDKVSKQIITKETLKEKLAEHVEQVDYEMALEYATQSGVSEEPRENIYLQHLDPNKSNFIDLHSPTFVFRLML.

A disordered region spans residues 1–30; the sequence is MAGDDLVETKKGSSKNSKDSNESKLKQKSP. The segment covering 7-25 has biased composition (basic and acidic residues); it reads VETKKGSSKNSKDSNESKL. Residues Asn-60, Asp-160, 181–182, 190–197, and Lys-516 each bind ATP; these read TK and GKFGLGAK.

Belongs to the TOP6B family. As to quaternary structure, homodimer. Heterotetramer of two TOP6A and two TOP6B subunits. Interacts with SPO11-2, but not with SPO11-1, RHL1 or BIN4. As to expression, highly expressed in leaves, stems, flowers and seedlings.

The protein localises to the nucleus. The enzyme catalyses ATP-dependent breakage, passage and rejoining of double-stranded DNA.. Its function is as follows. Component of the DNA topoisomerase VI involved in chromatin organization and progression of endoreduplication cycles. Relaxes both positive and negative superturns and exhibits a strong decatenase activity. The B subunit binds ATP. Involved in cell-elongation processes. This is DNA topoisomerase 6 subunit B from Arabidopsis thaliana (Mouse-ear cress).